A 417-amino-acid polypeptide reads, in one-letter code: MSLSNKLAITDVDLKDKRVLIRVDFNVPLDADKKITNNQRIVGALPTIKYAIENGAKAVVLMSHLGRPDGKANPKYSLKPVATELEKLLSKSVIFAENCVGKETEEIVNKATGGQIILLENLRFHAEEEGSSKDAEGKKVKADKEKVEEFRKGLTALGDVYINDAFGTAHRAHSSMVGVDLPQKASGFLVKKELEYFAKALESPQRPFLAILGGAKVSDKIQLIDNLLPKVNSLIITGAMAFTFKKTLENVKIGNSLFDEAGSKIVGDIVEKAKKNNVKIVLPVDYVTADKFAADAKTGYATDADGIPDGYMGLDVGEKSVELYKKTIAEAKTILWNGPPGVFELEPFANATKKTLDAAVAAAQSGSIVIIGGGDTATVAAKYGAEAKLSHVSTGGGASLELLEGKVLPGVDALSSK.

(2R)-3-phosphoglycerate-binding residues include valine 23, aspartate 24, phenylalanine 25, asparagine 26, glutamine 39, arginine 40, serine 63, histidine 64, glycine 66, arginine 67, leucine 122, arginine 123, histidine 170, and arginine 171. Position 214 (glycine 214) interacts with ADP. Glycine 214 provides a ligand contact to CDP. AMP contacts are provided by alanine 215 and lysine 216. Residue alanine 215 coordinates ATP. Residue alanine 215 coordinates Mg(2+). Aspartate 219 contacts CDP. Aspartate 219 contacts Mg(2+). Lysine 220 provides a ligand contact to AMP. Lysine 220 lines the ATP pocket. Glycine 238 is a binding site for ADP. Glycine 238 contacts CDP. AMP contacts are provided by alanine 239 and glycine 313. Positions 239 and 313 each coordinate ATP. The CDP site is built by glycine 338 and phenylalanine 343. Residue phenylalanine 343 coordinates ADP. Residue glutamate 344 coordinates AMP. Residues glutamate 344, aspartate 375, and threonine 376 each coordinate ATP. Aspartate 375 provides a ligand contact to Mg(2+).

Belongs to the phosphoglycerate kinase family. As to quaternary structure, monomer. Mg(2+) serves as cofactor.

It is found in the cytoplasm. The protein resides in the mitochondrion. The enzyme catalyses (2R)-3-phosphoglycerate + ATP = (2R)-3-phospho-glyceroyl phosphate + ADP. Its pathway is carbohydrate degradation; glycolysis; pyruvate from D-glyceraldehyde 3-phosphate: step 2/5. Catalyzes one of the two ATP producing reactions in the glycolytic pathway via the reversible conversion of 1,3-diphosphoglycerate to 3-phosphoglycerate. Both L- and D- forms of purine and pyrimidine nucleotides can be used as substrates, but the activity is much lower on pyrimidines. Negatively regulates the biosynthesis of acetyl-CoA from pyruvate in the mitochondrion. The chain is Phosphoglycerate kinase (pgkA) from Aspergillus oryzae (strain ATCC 42149 / RIB 40) (Yellow koji mold).